A 253-amino-acid polypeptide reads, in one-letter code: Indole-3-glycerol phosphate synthase (253 aa).

The protein belongs to the TrpC family.

The catalysed reaction is 1-(2-carboxyphenylamino)-1-deoxy-D-ribulose 5-phosphate + H(+) = (1S,2R)-1-C-(indol-3-yl)glycerol 3-phosphate + CO2 + H2O. Its pathway is amino-acid biosynthesis; L-tryptophan biosynthesis; L-tryptophan from chorismate: step 4/5. This Bacillus cereus (strain ATCC 10987 / NRS 248) protein is Indole-3-glycerol phosphate synthase.